The chain runs to 299 residues: Leucine zipper transcription factor-like protein 1 (299 aa).

Residues 145–299 (GTTELLNKEI…KRLAKYESED (155 aa)) form an interaction with BSS9 region. Residues 145-299 (GTTELLNKEI…KRLAKYESED (155 aa)) are a coiled coil.

It belongs to the LZTFL1 family. In terms of assembly, self-associates. Interacts with BBS9; the interaction mediates the association of LZTL1 with the BBsome complex and regulates BBSome ciliary trafficking.

Its subcellular location is the cytoplasm. Functionally, regulates ciliary localization of the BBSome complex. Together with the BBSome complex, controls SMO ciliary trafficking and contributes to the sonic hedgehog (SHH) pathway regulation. May play a role in neurite outgrowth. May have tumor suppressor function. The sequence is that of Leucine zipper transcription factor-like protein 1 (Lztfl1) from Rattus norvegicus (Rat).